The sequence spans 150 residues: 3-hydroxyacyl-[acyl-carrier-protein] dehydratase FabZ (150 aa).

The active site involves histidine 47.

The protein belongs to the thioester dehydratase family. FabZ subfamily.

The protein resides in the cytoplasm. It carries out the reaction a (3R)-hydroxyacyl-[ACP] = a (2E)-enoyl-[ACP] + H2O. Functionally, involved in unsaturated fatty acids biosynthesis. Catalyzes the dehydration of short chain beta-hydroxyacyl-ACPs and long chain saturated and unsaturated beta-hydroxyacyl-ACPs. This chain is 3-hydroxyacyl-[acyl-carrier-protein] dehydratase FabZ, found in Verminephrobacter eiseniae (strain EF01-2).